The following is a 122-amino-acid chain: Large ribosomal subunit protein uL14 (122 aa).

This sequence belongs to the universal ribosomal protein uL14 family. In terms of assembly, part of the 50S ribosomal subunit. Forms a cluster with proteins L3 and L19. In the 70S ribosome, L14 and L19 interact and together make contacts with the 16S rRNA in bridges B5 and B8.

In terms of biological role, binds to 23S rRNA. Forms part of two intersubunit bridges in the 70S ribosome. This chain is Large ribosomal subunit protein uL14, found in Wolinella succinogenes (strain ATCC 29543 / DSM 1740 / CCUG 13145 / JCM 31913 / LMG 7466 / NCTC 11488 / FDC 602W) (Vibrio succinogenes).